The chain runs to 681 residues: Spermatogenesis-associated protein 21 (681 aa).

Residues 1-14 (MENRNTHTHPESKA) show a composition bias toward basic and acidic residues. Disordered regions lie at residues 1–284 (MENR…ANSR) and 298–336 (EEAT…VPTL). 2 stretches are compositionally biased toward polar residues: residues 83–94 (QEPSARPRTTQD) and 159–173 (PSNS…NSPS). Residues 251 to 261 (PEERDTEKKEL) are compositionally biased toward basic and acidic residues. A compositionally biased stretch (polar residues) spans 264–281 (GQKQRQQALSAAGTQGPA). Residues 319 to 335 (TVTSVSTSGPISSSVPT) are compositionally biased toward low complexity. An EF-hand domain is found at 464–499 (FTPAQVEEALMSADVNGDGHVDFKDFLAVMTDTKRF). Residues aspartate 477, asparagine 479, aspartate 481, histidine 483, and aspartate 488 each coordinate Ca(2+). A disordered region spans residues 653–681 (LFFQPGQQGSREHSSDSRKWLSSMPARTH). Positions 662-671 (SREHSSDSRK) are enriched in basic and acidic residues.

In terms of biological role, involved in the differentiation of haploid spermatids. This chain is Spermatogenesis-associated protein 21 (Spata21), found in Mus musculus (Mouse).